Here is a 512-residue protein sequence, read N- to C-terminus: Dihydroniloticin synthase CYP71CD1 (512 aa).

A helical transmembrane segment spans residues 7-27 (YFTVTSLLVFLTFLLRLVWGW). Cys451 serves as a coordination point for heme.

The protein belongs to the cytochrome P450 family. Requires heme as cofactor. Accumulates in mature fruits and in juice vesicles.

The protein localises to the membrane. The catalysed reaction is tirucalla-7,24-dien-3beta-ol + 2 reduced [NADPH--hemoprotein reductase] + 2 O2 = dihydroniloticin + 2 oxidized [NADPH--hemoprotein reductase] + 2 H2O + 2 H(+). Its pathway is secondary metabolite biosynthesis; terpenoid biosynthesis. In terms of biological role, monooxygenase involved in the biosynthesis of limonoids triterpene natural products such as limonin, a compound with insecticidal activity responsible for the bitter taste in citrus. Catalyzes the conversion of tirucalladienol to dihydroniloticin. This Citrus sinensis (Sweet orange) protein is Dihydroniloticin synthase CYP71CD1.